The sequence spans 57 residues: Small hydrophobic protein (57 aa).

Topologically, residues 1-8 (MPAIQPPL) are virion surface. The chain crosses the membrane as a helical span at residues 9-29 (YLTFLLLMLLYRIITLYVWSL). Residues 30–57 (STITYKTSVRHASLYQRSFFRWSVDHSL) are Intravirion-facing.

It belongs to the rubulavirus small hydrophobic protein family. As to quaternary structure, interacts with host TNFRSF1A, RIPK1 and IRAK1; these interactions interfere with host NF-kappa-B activation at the level of receptor complexes. Interacts with host protein UBQLN4.

It is found in the virion membrane. The protein localises to the host cell membrane. Plays a role in the inhibition of the host NF-kappa-B pathway. This inhibition occurs at the receptor level, by preventing the signaling of TNFR1 as well as IL-1R and TLR3. This chain is Small hydrophobic protein (SH), found in Mumps virus (strain Edingburgh 4) (MuV).